Here is an 868-residue protein sequence, read N- to C-terminus: Leucine--tRNA ligase (868 aa).

Positions Pro-42 to His-52 match the 'HIGH' region motif. The short motif at Lys-627–Ser-631 is the 'KMSKS' region element. Residue Lys-630 coordinates ATP.

Belongs to the class-I aminoacyl-tRNA synthetase family.

The protein resides in the cytoplasm. It carries out the reaction tRNA(Leu) + L-leucine + ATP = L-leucyl-tRNA(Leu) + AMP + diphosphate. The sequence is that of Leucine--tRNA ligase from Pseudomonas putida (strain W619).